The primary structure comprises 238 residues: C-type lectin domain family 4 member A (238 aa).

Topologically, residues 1 to 48 (MASEITYAEVKFKNESNSLHTYSESPAAPREKPIRDLRKPGSPSLLLT) are cytoplasmic. An ITIM motif motif is present at residues 5-10 (ITYAEV). A helical; Signal-anchor for type II membrane protein membrane pass occupies residues 49 to 69 (SLMLLLLLLAITFLVAFIIYF). Residues 70–238 (QKYSQLLEEK…SVCQMKKINL (169 aa)) are Extracellular-facing. The N-linked (GlcNAc...) asparagine glycan is linked to Asn91. Cys107 and Cys118 form a disulfide bridge. Positions 126-233 (SSASWNKSEE…SLKQKSVCQM (108 aa)) constitute a C-type lectin domain. Asn131 and Asn136 each carry an N-linked (GlcNAc...) asparagine glycan. Intrachain disulfides connect Cys137–Cys231 and Cys205–Cys223. Positions 146, 152, 197, 199, and 203 each coordinate Ca(2+). Alpha-D-mannopyranose contacts are provided by residues 197-199 (EPS) and Glu203. 209-211 (IYR) is a binding site for N-acetyl-D-glucosamine. Ca(2+) contacts are provided by Asn219 and Asp220.

As to quaternary structure, may interact with PTPN6 via its ITIM site. As to expression, expressed in splenic antigen-presenting cells including B-cells, monocytes/macrophages, and dendritic cells (at protein level). Expressed in spleen and lymph node and slightly increased with dendritic cell maturation.

Its subcellular location is the cell membrane. May be involved in regulating immune reactivity. May play a role in modulating dendritic cells (DC) differentiation and/or maturation. May be involved in the inhibition of B-cell-receptor-mediated calcium mobilization and protein tyrosine phosphorylation. Its function is as follows. C-type lectin receptor that binds carbohydrates mannose and fucose but also weakly interacts with N-acetylglucosamine (GlcNAc) in a Ca(2+)-dependent manner. Involved in regulating immune reactivity. Once triggered by antigen, it is internalized by clathrin-dependent endocytosis and delivers its antigenic cargo into the antigen presentation pathway resulting in cross-priming of CD8(+) T cells. This cross-presentation and cross-priming are enhanced by TLR7 and TLR8 agonists with increased expansion of the CD8(+) T cells, high production of IFNG and TNF with reduced levels of IL4, IL5 and IL13. In plasmacytoid dendritic cells, inhibits TLR9-mediated IFNA and TNF production. May be involved via its ITIM motif (immunoreceptor tyrosine-based inhibitory motifs) in the inhibition of B-cell-receptor-mediated calcium mobilization and protein tyrosine phosphorylation. In Mus musculus (Mouse), this protein is C-type lectin domain family 4 member A (Clec4a).